Reading from the N-terminus, the 609-residue chain is Mitogen-activated protein kinase kinase kinase 3 (609 aa).

The tract at residues 1–202 (MPTWWGRKSC…SAVHGSRIGG (202 aa)) is disordered. The segment covering 11–28 (KNKDDNHRGIISTDRDIK) has biased composition (basic and acidic residues). Low complexity-rich tracts occupy residues 40–64 (PTRG…GFDS) and 90–108 (VSGS…SSGS). The 257-residue stretch at 214-470 (WKKGKFLGSG…ASQLLEHPFL (257 aa)) folds into the Protein kinase domain. Residues 220–228 (LGSGTFGQV) and Lys-243 each bind ATP. Residue Asp-339 is the Proton acceptor of the active site. Disordered regions lie at residues 487–511 (PRSY…SHDN) and 590–609 (MEPS…SRLV). The segment covering 594–609 (SFRTQTPNSPLRSRLV) has biased composition (polar residues).

The protein belongs to the protein kinase superfamily. STE Ser/Thr protein kinase family. MAP kinase kinase kinase subfamily. As to quaternary structure, interacts with PBL27. In terms of tissue distribution, expressed in flower buds, roots, leaves, seedlings, stems and immature siliques. Absent of mature pollen.

It catalyses the reaction L-seryl-[protein] + ATP = O-phospho-L-seryl-[protein] + ADP + H(+). It carries out the reaction L-threonyl-[protein] + ATP = O-phospho-L-threonyl-[protein] + ADP + H(+). The chain is Mitogen-activated protein kinase kinase kinase 3 from Arabidopsis thaliana (Mouse-ear cress).